The sequence spans 453 residues: Serine/threonine-protein phosphatase 2A 55 kDa regulatory subunit B delta isoform (453 aa).

4 WD repeats span residues 32–71 (AEAD…KGRA), 97–138 (EIEE…KRAE), 181–219 (AHTY…RSFN), and 230–270 (ELTE…LCDR). At Ser285 the chain carries Phosphoserine. WD repeat units follow at residues 289–327 (EIIS…RPVE), 344–385 (ENDC…DVTL), and 420–452 (DFNK…QDKI). Tyr305 is modified (phosphotyrosine). Residue Thr308 is modified to Phosphothreonine.

This sequence belongs to the phosphatase 2A regulatory subunit B family. PP2A consists of a common heterodimeric core enzyme, composed of a 36 kDa catalytic subunit (subunit C) and a 65 kDa constant regulatory subunit (PR65 or subunit A), that associates with a variety of regulatory subunits. Proteins that associate with the core dimer include three families of regulatory subunits B (the R2/B/PR55/B55, R3/B''/PR72/PR130/PR59 and R5/B'/B56 families), the 48 kDa variable regulatory subunit, viral proteins, and cell signaling molecules. Interacts with IER5.

It is found in the cytoplasm. Functionally, substrate-recognition subunit of protein phosphatase 2A (PP2A) that plays a key role in cell cycle by controlling mitosis entry and exit. Involved in chromosome clustering during late mitosis by mediating dephosphorylation of MKI67. The activity of PP2A complexes containing PPP2R2D (PR55-delta) fluctuate during the cell cycle: the activity is high in interphase and low in mitosis. The chain is Serine/threonine-protein phosphatase 2A 55 kDa regulatory subunit B delta isoform from Mus musculus (Mouse).